The chain runs to 148 residues: Lysozyme C (148 aa).

Positions 1 to 18 (MKALIILGLVLLSVTVQG) are cleaved as a signal peptide. The C-type lysozyme domain maps to 19-148 (KIFERCELAR…VSQYVKGCGV (130 aa)). Disulfide bonds link Cys-24–Cys-146, Cys-48–Cys-134, Cys-83–Cys-99, and Cys-95–Cys-113. Catalysis depends on residues Glu-53 and Asp-71.

Belongs to the glycosyl hydrolase 22 family. In terms of assembly, monomer.

The protein localises to the secreted. It carries out the reaction Hydrolysis of (1-&gt;4)-beta-linkages between N-acetylmuramic acid and N-acetyl-D-glucosamine residues in a peptidoglycan and between N-acetyl-D-glucosamine residues in chitodextrins.. Functionally, lysozymes have primarily a bacteriolytic function; those in tissues and body fluids are associated with the monocyte-macrophage system and enhance the activity of immunoagents. The polypeptide is Lysozyme C (LYZ) (Pygathrix nemaeus (Red-shanked douc langur)).